The following is a 40-amino-acid chain: Photosystem II reaction center protein J (40 aa).

Residues 10 to 30 (LWIIGTVTGILVIGLIGIFFF) traverse the membrane as a helical segment.

The protein belongs to the PsbJ family. PSII is composed of 1 copy each of membrane proteins PsbA, PsbB, PsbC, PsbD, PsbE, PsbF, PsbH, PsbI, PsbJ, PsbK, PsbL, PsbM, PsbT, PsbX, PsbY, PsbZ, Psb30/Ycf12, at least 3 peripheral proteins of the oxygen-evolving complex and a large number of cofactors. It forms dimeric complexes.

The protein resides in the plastid membrane. Its function is as follows. One of the components of the core complex of photosystem II (PSII). PSII is a light-driven water:plastoquinone oxidoreductase that uses light energy to abstract electrons from H(2)O, generating O(2) and a proton gradient subsequently used for ATP formation. It consists of a core antenna complex that captures photons, and an electron transfer chain that converts photonic excitation into a charge separation. The protein is Photosystem II reaction center protein J of Cuscuta exaltata (Tall dodder).